Reading from the N-terminus, the 457-residue chain is BAG family molecular chaperone regulator 4 (457 aa).

The tract at residues 1–101 is disordered; it reads MSALRRSGYG…QPPYPSYNSN (101 aa). Position 7 is a phosphoserine (S7). Positions 8–20 are enriched in low complexity; the sequence is GYGPSDGPSYGRY. Positions 30–47 are enriched in pro residues; the sequence is VHPPPPLYPLRPEPPQPP. Omega-N-methylarginine occurs at positions 40, 53, and 108. 3 disordered regions span residues 113-136, 166-333, and 347-377; these read YPST…NGAY, STEV…DDSD, and LYGN…ESTP. The segment covering 166–182 has biased composition (polar residues); that stretch reads STEVPSTYRSSGNSPTP. Omega-N-methylarginine is present on R185. Composition is skewed to low complexity over residues 274–284 and 294–308; these read STSPWPSSGSP and QPKD…SDQS. Polar residues-rich tracts occupy residues 320–333 and 347–365; these read QYES…DDSD and LYGN…SSSL. Positions 379–456 constitute a BAG domain; that stretch reads SIKKIIHVLE…AILEKLEKKG (78 aa).

Binds to the ATPase domain of HSP/HSC70 chaperones. Binds to the death domain of TNFRSF1A in the absence of TNF and thereby prevents binding of adapter molecules such as TRADD or TRAF2. Binds to the death domain of TNFRSF12. Interacts with PRKN. In terms of tissue distribution, ubiquitous.

It localises to the cytoplasm. Functionally, inhibits the chaperone activity of HSP70/HSC70 by promoting substrate release. Prevents constitutive TNFRSF1A signaling. Negative regulator of PRKN translocation to damaged mitochondria. The polypeptide is BAG family molecular chaperone regulator 4 (BAG4) (Homo sapiens (Human)).